Here is a 313-residue protein sequence, read N- to C-terminus: Protein-methionine-sulfoxide reductase catalytic subunit MsrP (313 aa).

Residues Met-1–Ala-45 constitute a signal peptide (tat-type signal). Mo-molybdopterin-binding positions include Asn-71, Tyr-74 to Glu-75, Cys-128, Thr-163, Asn-213, Arg-218, and Gly-229 to Lys-231.

It belongs to the MsrP family. In terms of assembly, heterodimer of a catalytic subunit (MsrP) and a heme-binding subunit (MsrQ). It depends on Mo-molybdopterin as a cofactor. Predicted to be exported by the Tat system. The position of the signal peptide cleavage has not been experimentally proven.

It localises to the periplasm. It carries out the reaction L-methionyl-[protein] + a quinone + H2O = L-methionyl-(S)-S-oxide-[protein] + a quinol. The catalysed reaction is L-methionyl-[protein] + a quinone + H2O = L-methionyl-(R)-S-oxide-[protein] + a quinol. Functionally, part of the MsrPQ system that repairs oxidized periplasmic proteins containing methionine sulfoxide residues (Met-O), using respiratory chain electrons. Thus protects these proteins from oxidative-stress damage caused by reactive species of oxygen and chlorine generated by the host defense mechanisms. MsrPQ is essential for the maintenance of envelope integrity under bleach stress, rescuing a wide series of structurally unrelated periplasmic proteins from methionine oxidation. The catalytic subunit MsrP is non-stereospecific, being able to reduce both (R-) and (S-) diastereoisomers of methionine sulfoxide. In Agrobacterium fabrum (strain C58 / ATCC 33970) (Agrobacterium tumefaciens (strain C58)), this protein is Protein-methionine-sulfoxide reductase catalytic subunit MsrP.